The primary structure comprises 291 residues: ATP synthase gamma chain (291 aa).

Belongs to the ATPase gamma chain family. As to quaternary structure, F-type ATPases have 2 components, CF(1) - the catalytic core - and CF(0) - the membrane proton channel. CF(1) has five subunits: alpha(3), beta(3), gamma(1), delta(1), epsilon(1). CF(0) has three main subunits: a, b and c.

It localises to the cell inner membrane. Functionally, produces ATP from ADP in the presence of a proton gradient across the membrane. The gamma chain is believed to be important in regulating ATPase activity and the flow of protons through the CF(0) complex. The chain is ATP synthase gamma chain from Cupriavidus necator (strain ATCC 17699 / DSM 428 / KCTC 22496 / NCIMB 10442 / H16 / Stanier 337) (Ralstonia eutropha).